Here is a 258-residue protein sequence, read N- to C-terminus: Aspartate/glutamate leucyltransferase (258 aa).

Belongs to the R-transferase family. Bpt subfamily.

Its subcellular location is the cytoplasm. The catalysed reaction is N-terminal L-glutamyl-[protein] + L-leucyl-tRNA(Leu) = N-terminal L-leucyl-L-glutamyl-[protein] + tRNA(Leu) + H(+). It carries out the reaction N-terminal L-aspartyl-[protein] + L-leucyl-tRNA(Leu) = N-terminal L-leucyl-L-aspartyl-[protein] + tRNA(Leu) + H(+). Its function is as follows. Functions in the N-end rule pathway of protein degradation where it conjugates Leu from its aminoacyl-tRNA to the N-termini of proteins containing an N-terminal aspartate or glutamate. This chain is Aspartate/glutamate leucyltransferase, found in Bradyrhizobium sp. (strain ORS 278).